Here is a 416-residue protein sequence, read N- to C-terminus: UBX domain-containing protein 4 (416 aa).

The 78-residue stretch at 273 to 350 folds into the UBX domain; the sequence is KAISECLLRV…EFGSKTMLLF (78 aa). The tract at residues 376-402 is disordered; sequence TRTTPSVNTINKSNPQGPSDNATSIKK. Positions 378 to 402 are enriched in polar residues; it reads TTPSVNTINKSNPQGPSDNATSIKK.

It localises to the nucleus. Its subcellular location is the cytoplasm. In terms of biological role, involved in CDC48-dependent protein degradation through the ubiquitin/proteasome pathway. This Saccharomyces cerevisiae (strain ATCC 204508 / S288c) (Baker's yeast) protein is UBX domain-containing protein 4 (UBX4).